A 433-amino-acid polypeptide reads, in one-letter code: GTPase Der (433 aa).

EngA-type G domains lie at 3 to 167 and 174 to 349; these read NIVA…QDTI and PKIA…TNKT. GTP-binding positions include 9–16, 56–60, 119–122, 180–187, 227–231, and 292–295; these read GRPNVGKS, DTGGY, NKAD, DTAGI, and NKWD. The region spanning 350-433 is the KH-like domain; it reads QKISTAALNQ…VPVQLVFRKK (84 aa).

The protein belongs to the TRAFAC class TrmE-Era-EngA-EngB-Septin-like GTPase superfamily. EngA (Der) GTPase family. As to quaternary structure, associates with the 50S ribosomal subunit.

GTPase that plays an essential role in the late steps of ribosome biogenesis. The sequence is that of GTPase Der from Amoebophilus asiaticus (strain 5a2).